Reading from the N-terminus, the 202-residue chain is Ras-related protein RABD2b (202 aa).

GTP contacts are provided by residues 15–23 (GDSGVGKSC), 33–40 (YLDSYIST), 63–67 (DTAGQ), 121–124 (NKND), and 151–153 (SAK). Residues 37 to 45 (YISTIGVDF) carry the Effector region motif. The disordered stretch occupies residues 174–202 (ASQPAGGAKPPTVQIRGQPVNQQSGCCSS). The span at 192-202 (PVNQQSGCCSS) shows a compositional bias: polar residues. 2 S-geranylgeranyl cysteine lipidation sites follow: Cys-199 and Cys-200.

Belongs to the small GTPase superfamily. Rab family.

It is found in the golgi apparatus. The protein localises to the trans-Golgi network membrane. It localises to the golgi apparatus membrane. In terms of biological role, protein transport. Regulator of membrane traffic from the Golgi apparatus towards the endoplasmic reticulum (ER). In Arabidopsis thaliana (Mouse-ear cress), this protein is Ras-related protein RABD2b (RABD2B).